Here is a 217-residue protein sequence, read N- to C-terminus: Peptidyl-tRNA hydrolase (217 aa).

Tyrosine 14 contacts tRNA. The active-site Proton acceptor is the histidine 19. Residues tyrosine 64, asparagine 66, and asparagine 113 each coordinate tRNA. Positions 182 to 217 are disordered; it reads MNRINAPPPKPKREQKRSSDAPDSSSDTNTSNASDG. Over residues 202–217 the composition is skewed to low complexity; that stretch reads APDSSSDTNTSNASDG.

This sequence belongs to the PTH family. In terms of assembly, monomer.

The protein resides in the cytoplasm. It catalyses the reaction an N-acyl-L-alpha-aminoacyl-tRNA + H2O = an N-acyl-L-amino acid + a tRNA + H(+). In terms of biological role, hydrolyzes ribosome-free peptidyl-tRNAs (with 1 or more amino acids incorporated), which drop off the ribosome during protein synthesis, or as a result of ribosome stalling. Functionally, catalyzes the release of premature peptidyl moieties from peptidyl-tRNA molecules trapped in stalled 50S ribosomal subunits, and thus maintains levels of free tRNAs and 50S ribosomes. This is Peptidyl-tRNA hydrolase from Roseiflexus sp. (strain RS-1).